The following is a 546-amino-acid chain: Mitochondrial distribution and morphology protein 34 (546 aa).

The SMP-LTD domain occupies 1–195; it reads MAFNFNWSPL…LPAIIHRLSL (195 aa). Disordered stretches follow at residues 208–230, 299–319, 344–382, 395–416, and 517–546; these read EVKADEEAGPGQDPLLSPPQDPV, SHGGLISPASPPLSRTHSHVA, TMGAGRHPRTRPSRKHKRRVVDLRKPQKLDDTSSTCTDS, SSSARVGEKPDDPITPPVSPDA, and RRIQEGKGPGSVGSNYCGRRDPSPPPAYGQ. Positions 349–362 are enriched in basic residues; that stretch reads RHPRTRPSRKHKRR. Residues 363–374 are compositionally biased toward basic and acidic residues; that stretch reads VVDLRKPQKLDD.

Belongs to the MDM34 family. As to quaternary structure, component of the ER-mitochondria encounter structure (ERMES) or MDM complex, composed of MMM1, MDM10, MDM12 and MDM34.

It localises to the mitochondrion outer membrane. Component of the ERMES/MDM complex, which serves as a molecular tether to connect the endoplasmic reticulum (ER) and mitochondria. Components of this complex are involved in the control of mitochondrial shape and protein biogenesis, and function in nonvesicular lipid trafficking between the ER and mitochondria. MDM34 is required for the interaction of the ER-resident membrane protein MMM1 and the outer mitochondrial membrane-resident beta-barrel protein MDM10. This Arthroderma otae (strain ATCC MYA-4605 / CBS 113480) (Microsporum canis) protein is Mitochondrial distribution and morphology protein 34.